We begin with the raw amino-acid sequence, 796 residues long: Probable phosphoketolase (796 aa).

Belongs to the XFP family. Requires thiamine diphosphate as cofactor.

This Clostridium acetobutylicum (strain ATCC 824 / DSM 792 / JCM 1419 / IAM 19013 / LMG 5710 / NBRC 13948 / NRRL B-527 / VKM B-1787 / 2291 / W) protein is Probable phosphoketolase.